A 38-amino-acid polypeptide reads, in one-letter code: Defensin-1 (38 aa).

Disulfide bonds link C4–C25, C11–C33, and C15–C35.

The protein localises to the secreted. Has antibacterial activity against the Gram-positive bacteria L.lactis and S.aureus, and against the Gram-negative bacteria E.coli D32 and V.parahemolyticus. This Crassostrea virginica (Eastern oyster) protein is Defensin-1.